Consider the following 972-residue polypeptide: 116 kDa U5 small nuclear ribonucleoprotein component (972 aa).

Position 1 is an N-acetylmethionine (Met-1). Positions 1-54 are disordered; sequence MDTDLYDEFGNYIGPELDSDEDDDELGRETKDLDEMDDDDDDDDIGDHDDDHPG. 2 stretches are compositionally biased toward acidic residues: residues 17–26 and 34–48; these read LDSDEDDDEL and DEMD…IGDH. At Ser-19 the chain carries Phosphoserine. Residue Lys-64 forms a Glycyl lysine isopeptide (Lys-Gly) (interchain with G-Cter in SUMO1); alternate linkage. Residue Lys-64 forms a Glycyl lysine isopeptide (Lys-Gly) (interchain with G-Cter in SUMO2); alternate linkage. A Phosphothreonine modification is found at Thr-86. In terms of domain architecture, tr-type G spans 127–409; the sequence is ELIRNVTLCG…GIHLTKEELK (283 aa). GTP-binding positions include 136–143, 204–208, and 258–261; these read GHLHHGKT, DTPGH, and NKID.

The protein belongs to the TRAFAC class translation factor GTPase superfamily. Classic translation factor GTPase family. EF-G/EF-2 subfamily. In terms of assembly, component of the U5 snRNP and the U4/U6-U5 tri-snRNP complex, a building block of the spliceosome. The U4/U6-U5 tri-snRNP complex is composed of the U4, U6 and U5 snRNAs and at least PRPF3, PRPF4, PRPF6, PRPF8, PRPF31, SNRNP200, TXNL4A, SNRNP40, DDX23, CD2BP2, PPIH, SNU13, EFTUD2, SART1 and USP39. Component of the pre-catalytic, catalytic and post-catalytic spliceosome complexes. Component of the minor spliceosome, which splices U12-type introns. Within this complex, interacts with CRIPT. Interacts with ERBB4 and PRPF8. Interacts with PIH1D1. Interacts with RPAP3 and URI1 in a ZNHIT2-dependent manner. Interacts with NRDE2. Interacts with FAM50A. Interacts with UBL5.

The protein localises to the nucleus. Required for pre-mRNA splicing as component of the spliceosome, including pre-catalytic, catalytic and post-catalytic spliceosomal complexes. Component of the U5 snRNP and the U4/U6-U5 tri-snRNP complex, a building block of the spliceosome. As a component of the minor spliceosome, involved in the splicing of U12-type introns in pre-mRNAs. This Pongo abelii (Sumatran orangutan) protein is 116 kDa U5 small nuclear ribonucleoprotein component (EFTUD2).